The sequence spans 396 residues: MGKEKLILAYSGGLDTSVAIAWLKKDYDVIAVCMDVGEGKDLDFIHDKALTIGAIESYILDVKDEFAEHFVLPALQAHAMYEQKYPLVSALSRPIIAQKLVEMAHQTGATTIAHGCTGKGNDQVRFEVAIAALDPELKVIAPVREWKWHREEEITFAKANGVPIPADLDNPYSIDQNLWGRANECGVLENPWNQAPEEAFGITKSPEEAPDCAEYIDITFQNGKPIAINNQEMTLSDLILSLNEIAGKHGIGRIDHVENRLVGIKSREIYECPAAMVLLAAHKEIEDLTLVREVSHFKPILENELSNLIYNALWFSPATKAIIAYVKETQKVVNGTTKVKLYKGSAQVVARHSSNSLYDENLATYTAADSFDQDAAVGFIKLWGLPTQVNAQVNKG.

Residue A9 to S17 participates in ATP binding. Residue Y85 participates in L-citrulline binding. Residue G115 coordinates ATP. 3 residues coordinate L-aspartate: T117, N121, and D122. Position 121 (N121) interacts with L-citrulline. L-citrulline contacts are provided by R125, S173, E258, and Y270.

This sequence belongs to the argininosuccinate synthase family. Type 1 subfamily. Homotetramer.

The protein resides in the cytoplasm. The enzyme catalyses L-citrulline + L-aspartate + ATP = 2-(N(omega)-L-arginino)succinate + AMP + diphosphate + H(+). Its pathway is amino-acid biosynthesis; L-arginine biosynthesis; L-arginine from L-ornithine and carbamoyl phosphate: step 2/3. This Streptococcus agalactiae serotype Ia (strain ATCC 27591 / A909 / CDC SS700) protein is Argininosuccinate synthase.